A 582-amino-acid polypeptide reads, in one-letter code: Arginine--tRNA ligase (582 aa).

The 'HIGH' region motif lies at 127–137; sequence PNLAKEMHVGH.

It belongs to the class-I aminoacyl-tRNA synthetase family. As to quaternary structure, monomer.

The protein resides in the cytoplasm. It catalyses the reaction tRNA(Arg) + L-arginine + ATP = L-arginyl-tRNA(Arg) + AMP + diphosphate. This is Arginine--tRNA ligase from Psychromonas ingrahamii (strain DSM 17664 / CCUG 51855 / 37).